We begin with the raw amino-acid sequence, 296 residues long: Phosphatidylserine decarboxylase proenzyme (296 aa).

Catalysis depends on charge relay system; for autoendoproteolytic cleavage activity residues Asp-113, His-169, and Ser-256. Ser-256 functions as the Schiff-base intermediate with substrate; via pyruvic acid; for decarboxylase activity in the catalytic mechanism. Ser-256 carries the pyruvic acid (Ser); by autocatalysis modification.

This sequence belongs to the phosphatidylserine decarboxylase family. PSD-B subfamily. Prokaryotic type II sub-subfamily. As to quaternary structure, heterodimer of a large membrane-associated beta subunit and a small pyruvoyl-containing alpha subunit. It depends on pyruvate as a cofactor. In terms of processing, is synthesized initially as an inactive proenzyme. Formation of the active enzyme involves a self-maturation process in which the active site pyruvoyl group is generated from an internal serine residue via an autocatalytic post-translational modification. Two non-identical subunits are generated from the proenzyme in this reaction, and the pyruvate is formed at the N-terminus of the alpha chain, which is derived from the carboxyl end of the proenzyme. The autoendoproteolytic cleavage occurs by a canonical serine protease mechanism, in which the side chain hydroxyl group of the serine supplies its oxygen atom to form the C-terminus of the beta chain, while the remainder of the serine residue undergoes an oxidative deamination to produce ammonia and the pyruvoyl prosthetic group on the alpha chain. During this reaction, the Ser that is part of the protease active site of the proenzyme becomes the pyruvoyl prosthetic group, which constitutes an essential element of the active site of the mature decarboxylase.

The protein localises to the cell membrane. It catalyses the reaction a 1,2-diacyl-sn-glycero-3-phospho-L-serine + H(+) = a 1,2-diacyl-sn-glycero-3-phosphoethanolamine + CO2. The protein operates within phospholipid metabolism; phosphatidylethanolamine biosynthesis; phosphatidylethanolamine from CDP-diacylglycerol: step 2/2. Functionally, catalyzes the formation of phosphatidylethanolamine (PtdEtn) from phosphatidylserine (PtdSer). The chain is Phosphatidylserine decarboxylase proenzyme from Clostridium beijerinckii (strain ATCC 51743 / NCIMB 8052) (Clostridium acetobutylicum).